Reading from the N-terminus, the 143-residue chain is Small ribosomal subunit protein uS11c (143 aa).

The protein belongs to the universal ribosomal protein uS11 family. As to quaternary structure, part of the 30S ribosomal subunit.

It is found in the plastid. The protein resides in the chloroplast. The protein is Small ribosomal subunit protein uS11c of Hordeum vulgare (Barley).